Consider the following 740-residue polypeptide: ATP-dependent zinc metalloprotease YME1L (740 aa).

Residues 1-256 lie on the Mitochondrial matrix side of the membrane; the sequence is MFSTTTHSVP…KSGKTMKYLK (256 aa). The helical transmembrane segment at 257-277 threads the bilayer; it reads TLQTIVVIVVFLGIFLSFFTT. Over 278-740 the chain is Mitochondrial intermembrane; sequence SNGSVFRSIQ…IKAILNESQT (463 aa). Position 347 to 351 (347 to 351) interacts with ATP; the sequence is GTGKT. Zn(2+) is bound at residue His563. Residue Glu564 is part of the active site. 2 residues coordinate Zn(2+): His567 and Asp641.

This sequence in the N-terminal section; belongs to the AAA ATPase family. The protein in the C-terminal section; belongs to the peptidase M41 family. Requires Zn(2+) as cofactor.

The protein localises to the mitochondrion inner membrane. Functionally, ATP-dependent metalloprotease that catalyzes the degradation of folded and unfolded proteins with a suitable degron sequence in the mitochondrial intermembrane region. Plays an important role in regulating mitochondrial morphology and function by cleaving Opa1, giving rise to a form of Opa1 that promotes maintenance of normal mitochondrial structure and mitochondrial protein metabolism. Ensures cell proliferation, maintains normal cristae morphology and complex I respiration activity, promotes antiapoptotic activity and protects mitochondria from the accumulation of oxidatively damaged membrane proteins. Required to control the accumulation of nonassembled respiratory chain subunits such as ND-30. In Drosophila melanogaster (Fruit fly), this protein is ATP-dependent zinc metalloprotease YME1L.